Reading from the N-terminus, the 203-residue chain is MTQYTFKPKDFKAFEVEGLDARMEALNEYVRPQLNQLGDYFSEYFTSQTGETFYAHVAKHARRSVNPPVDTWVAFAPNKRGYKMLPHFQIGLFKDHLFLMFGVMHEGKDKAERVKVFDKHFDVLKQLPEDYQVSLDHMKPEKSYIKDLSDDELHKAIDRVKNVKKGEFFVARSLSPKDAELKSDKAFLSFVKETFDEFLKFYE.

It belongs to the UPF0637 family.

The chain is UPF0637 protein SH1846 from Staphylococcus haemolyticus (strain JCSC1435).